Here is a 429-residue protein sequence, read N- to C-terminus: C4-dicarboxylate transport protein (429 aa).

A run of 8 helical transmembrane segments spans residues 9–29, 45–65, 79–99, 149–169, 185–205, 223–243, 308–328, and 356–376; these read VLYV…HYYP, LIKM…IAGM, LLYF…ATHI, GEIL…AHLG, VLFG…FGAM, LIGT…GTIA, IYMT…LTWM, and AATL…ILGI.

It belongs to the dicarboxylate/amino acid:cation symporter (DAACS) (TC 2.A.23) family.

Its subcellular location is the cell inner membrane. Its function is as follows. Responsible for the transport of dicarboxylates such as succinate, fumarate, and malate from the periplasm across the membrane. The sequence is that of C4-dicarboxylate transport protein from Burkholderia lata (strain ATCC 17760 / DSM 23089 / LMG 22485 / NCIMB 9086 / R18194 / 383).